The following is a 266-amino-acid chain: Thymidylate synthase (266 aa).

Residue Arg24 participates in dUMP binding. His54 serves as a coordination point for (6R)-5,10-methylene-5,6,7,8-tetrahydrofolate. Residue 129 to 130 (RR) participates in dUMP binding. Cys149 functions as the Nucleophile in the catalytic mechanism. Residues 169 to 172 (RSAD), Asn180, and 210 to 212 (HIY) each bind dUMP. Asp172 is a (6R)-5,10-methylene-5,6,7,8-tetrahydrofolate binding site. Residue Ala265 coordinates (6R)-5,10-methylene-5,6,7,8-tetrahydrofolate.

This sequence belongs to the thymidylate synthase family. Bacterial-type ThyA subfamily. In terms of assembly, homodimer.

The protein localises to the cytoplasm. It carries out the reaction dUMP + (6R)-5,10-methylene-5,6,7,8-tetrahydrofolate = 7,8-dihydrofolate + dTMP. It participates in pyrimidine metabolism; dTTP biosynthesis. Catalyzes the reductive methylation of 2'-deoxyuridine-5'-monophosphate (dUMP) to 2'-deoxythymidine-5'-monophosphate (dTMP) while utilizing 5,10-methylenetetrahydrofolate (mTHF) as the methyl donor and reductant in the reaction, yielding dihydrofolate (DHF) as a by-product. This enzymatic reaction provides an intracellular de novo source of dTMP, an essential precursor for DNA biosynthesis. The chain is Thymidylate synthase from Mycobacterium leprae (strain TN).